The following is a 115-amino-acid chain: Large ribosomal subunit protein bL19 (115 aa).

Belongs to the bacterial ribosomal protein bL19 family.

Its function is as follows. This protein is located at the 30S-50S ribosomal subunit interface and may play a role in the structure and function of the aminoacyl-tRNA binding site. In Streptococcus pyogenes serotype M2 (strain MGAS10270), this protein is Large ribosomal subunit protein bL19.